Here is a 118-residue protein sequence, read N- to C-terminus: Aspartate 1-decarboxylase 1 (118 aa).

Ser25 (schiff-base intermediate with substrate; via pyruvic acid) is an active-site residue. Ser25 is subject to Pyruvic acid (Ser). Position 57 (Thr57) interacts with substrate. The Proton donor role is filled by Tyr58. Gly73–Ala75 serves as a coordination point for substrate.

This sequence belongs to the PanD family. In terms of assembly, heterooctamer of four alpha and four beta subunits. The cofactor is pyruvate. Post-translationally, is synthesized initially as an inactive proenzyme, which is activated by self-cleavage at a specific serine bond to produce a beta-subunit with a hydroxyl group at its C-terminus and an alpha-subunit with a pyruvoyl group at its N-terminus.

It localises to the cytoplasm. The enzyme catalyses L-aspartate + H(+) = beta-alanine + CO2. It participates in cofactor biosynthesis; (R)-pantothenate biosynthesis; beta-alanine from L-aspartate: step 1/1. Catalyzes the pyruvoyl-dependent decarboxylation of aspartate to produce beta-alanine. This chain is Aspartate 1-decarboxylase 1, found in Gloeobacter violaceus (strain ATCC 29082 / PCC 7421).